We begin with the raw amino-acid sequence, 228 residues long: NGGTEGNMFGCYLGREIFPNGTLYYSKDTHYSVAKIVKLLRIKSTLVESQPNGEMDYADLIKKIKRDNEKHPIIFANIGTTVRGAIDNIAIIQQSISELGIERKDYYLHADAALSGMILPFVDNPQPFNFADGIDSIGVSGHKMIGSPIPCGIVVAKKKNVDRISVEIDYISAHDKTISGSRNGHTPLMMWEAIRSHSWEEWRRRIERSLNMAQYAVDRFQSAGIDAW.

His-30 provides a ligand contact to substrate. N6-(pyridoxal phosphate)lysine is present on Lys-143.

Belongs to the group II decarboxylase family. As to quaternary structure, homotetramer. It depends on pyridoxal 5'-phosphate as a cofactor.

The catalysed reaction is L-histidine + H(+) = histamine + CO2. In Raoultella ornithinolytica (Klebsiella ornithinolytica), this protein is Histidine decarboxylase (hdc).